The sequence spans 134 residues: Small ribosomal subunit protein uS8c (134 aa).

Component of the chloroplast small ribosomal subunit (SSU). Mature 70S chloroplast ribosomes of higher plants consist of a small (30S) and a large (50S) subunit. The 30S small subunit contains 1 molecule of ribosomal RNA (16S rRNA) and 24 different proteins. The 50S large subunit contains 3 rRNA molecules (23S, 5S and 4.5S rRNA) and 33 different proteins.

The protein localises to the plastid. Its subcellular location is the chloroplast. Its function is as follows. Component of the chloroplast ribosome (chloro-ribosome), a dedicated translation machinery responsible for the synthesis of chloroplast genome-encoded proteins, including proteins of the transcription and translation machinery and components of the photosynthetic apparatus. This is Small ribosomal subunit protein uS8c (rps8) from Spinacia oleracea (Spinach).